We begin with the raw amino-acid sequence, 198 residues long: Host transcription reprogramming factor 1 (198 aa).

The N-terminal stretch at 1–19 (MQLSNFLSIWALVAMGATA) is a signal peptide. Disordered stretches follow at residues 21 to 59 (PMPS…SYHS) and 71 to 198 (ERLA…PVQL). The segment at 58–81 (HSCETCAAPFRTEERLAAHRQADH) adopts a C2H2-type zinc-finger fold. Basic and acidic residues-rich tracts occupy residues 71 to 80 (ERLAAHRQAD), 104 to 128 (TSER…RSQE), and 167 to 177 (KLDKPTRKEQY).

It localises to the secreted. The protein localises to the host nucleus. In terms of biological role, secreted effector that translocates into the nuclei of host cells to reprogram the expression of immunity-associated genes by binding to effector binding elements (EBEs) in rice. Binds the 5'-CAATCTTC-3' EBE of promoters from targeted rice genes and probably recruits a yet to be determined host repressor. Causes ambivalent immunity with increased susceptibility to the hemibiotrophic pathogens Magnaporthe oryzae and Xanthomonas oryzae pv. oryzae, but enhances resistance to Cochliobolus miyabeanus, a necrotrophic pathogen. The protein is Host transcription reprogramming factor 1 of Pyricularia oryzae (strain 70-15 / ATCC MYA-4617 / FGSC 8958) (Rice blast fungus).